We begin with the raw amino-acid sequence, 445 residues long: Phosphoglucosamine mutase (445 aa).

Residue Ser-102 is the Phosphoserine intermediate of the active site. Mg(2+) contacts are provided by Ser-102, Asp-241, Asp-243, and Asp-245. The residue at position 102 (Ser-102) is a Phosphoserine.

It belongs to the phosphohexose mutase family. The cofactor is Mg(2+). In terms of processing, activated by phosphorylation.

It carries out the reaction alpha-D-glucosamine 1-phosphate = D-glucosamine 6-phosphate. Functionally, catalyzes the conversion of glucosamine-6-phosphate to glucosamine-1-phosphate. This is Phosphoglucosamine mutase from Zymomonas mobilis subsp. mobilis (strain ATCC 31821 / ZM4 / CP4).